The chain runs to 622 residues: Arginine--tRNA ligase (622 aa).

The short motif at 127-137 (ANPVHPLHVGH) is the 'HIGH' region element.

It belongs to the class-I aminoacyl-tRNA synthetase family.

Its subcellular location is the cytoplasm. The catalysed reaction is tRNA(Arg) + L-arginine + ATP = L-arginyl-tRNA(Arg) + AMP + diphosphate. The sequence is that of Arginine--tRNA ligase from Ignicoccus hospitalis (strain KIN4/I / DSM 18386 / JCM 14125).